We begin with the raw amino-acid sequence, 279 residues long: Four and a half LIM domains protein 2 (279 aa).

The C4-type zinc-finger motif lies at 7-31 (CHHCNESLYGKKYILKEENPHCVAC). 3 consecutive LIM zinc-binding domains span residues 40–92 (CEEC…CTDC), 101–153 (CQEC…CVPC), and 162–212 (CVQC…CLTC). Residue lysine 78 forms a Glycyl lysine isopeptide (Lys-Gly) (interchain with G-Cter in SUMO2) linkage. Residues lysine 167 and lysine 220 each participate in a glycyl lysine isopeptide (Lys-Gly) (interchain with G-Cter in SUMO2) cross-link. One can recognise an LIM zinc-binding 4 domain in the interval 221-275 (CAGCTNPISGLGGTKYISFEERQWHNDCFNCKKCSLSLVGRGFLTERDDILCPDC). Serine 238 carries the post-translational modification Phosphoserine.

As to quaternary structure, interacts with ZNF638 and TTN/titin. Interacts with E4F1. Interacts with GRB7. Interacts with SIRT1 and FOXO1. Interacts with CEFIP and calcineurin. Interacts with FOXK1. In terms of tissue distribution, expressed in heart only (at protein level).

The protein localises to the cytoplasm. Its subcellular location is the nucleus. It is found in the myofibril. It localises to the sarcomere. The protein resides in the z line. Functionally, may function as a molecular transmitter linking various signaling pathways to transcriptional regulation. Negatively regulates the transcriptional repressor E4F1 and may function in cell growth. Inhibits the transcriptional activity of FOXO1 and its apoptotic function by enhancing the interaction of FOXO1 with SIRT1 and FOXO1 deacetylation. Negatively regulates the calcineurin/NFAT signaling pathway in cardiomyocytes. This Rattus norvegicus (Rat) protein is Four and a half LIM domains protein 2 (Fhl2).